The following is a 210-amino-acid chain: Imidazoleglycerol-phosphate dehydratase (210 aa).

A disordered region spans residues 1-23; it reads MNDSLLSNGHAPPLRQATVDRQT.

Belongs to the imidazoleglycerol-phosphate dehydratase family.

The protein localises to the cytoplasm. The enzyme catalyses D-erythro-1-(imidazol-4-yl)glycerol 3-phosphate = 3-(imidazol-4-yl)-2-oxopropyl phosphate + H2O. It functions in the pathway amino-acid biosynthesis; L-histidine biosynthesis; L-histidine from 5-phospho-alpha-D-ribose 1-diphosphate: step 6/9. The chain is Imidazoleglycerol-phosphate dehydratase from Thermosynechococcus vestitus (strain NIES-2133 / IAM M-273 / BP-1).